We begin with the raw amino-acid sequence, 473 residues long: Cell division protein FtsP (473 aa).

Positions 1 to 27 (MSFSRRQFIQVSGLAMCIGAAPLLVRA) form a signal peptide, tat-type signal.

The protein belongs to the FtsP family. Post-translationally, predicted to be exported by the Tat system. The position of the signal peptide cleavage has not been experimentally proven.

The protein resides in the periplasm. Cell division protein that is required for growth during stress conditions. May be involved in protecting or stabilizing the divisomal assembly under conditions of stress. This is Cell division protein FtsP from Photorhabdus laumondii subsp. laumondii (strain DSM 15139 / CIP 105565 / TT01) (Photorhabdus luminescens subsp. laumondii).